The sequence spans 114 residues: Hydrogenase maturation factor HypA (114 aa).

Residue His-2 participates in Ni(2+) binding. Residues Cys-73, Cys-76, Cys-90, and Cys-93 each contribute to the Zn(2+) site.

This sequence belongs to the HypA/HybF family.

In terms of biological role, involved in the maturation of [NiFe] hydrogenases. Required for nickel insertion into the metal center of the hydrogenase. This is Hydrogenase maturation factor HypA from Klebsiella pneumoniae subsp. pneumoniae (strain ATCC 700721 / MGH 78578).